A 533-amino-acid chain; its full sequence is WD repeat-containing protein JIP5 (533 aa).

WD repeat units lie at residues 26–67 (NYSD…EKQS), 84–130 (GKVS…GSCR), 176–215 (NSND…GSKL), 264–309 (NQDD…FMDQ), and 372–409 (GAAD…EIAL). Composition is skewed to acidic residues over residues 408-428 (ALDE…EDDL) and 437-452 (ASDE…EDEK). The tract at residues 408-533 (ALDESDDSDD…EHGIRRFDDL (126 aa)) is disordered. 2 stretches are compositionally biased toward basic and acidic residues: residues 453–463 (EDKPVKIDHPL) and 521–533 (QKHE…FDDL).

The protein belongs to the WD repeat WDR55 family.

It localises to the nucleus. It is found in the nucleolus. The protein is WD repeat-containing protein JIP5 (JIP5) of Scheffersomyces stipitis (strain ATCC 58785 / CBS 6054 / NBRC 10063 / NRRL Y-11545) (Yeast).